A 504-amino-acid chain; its full sequence is Putative lipase ATG15 (504 aa).

Residue M1 is a topological domain, cytoplasmic. Residues 2–22 traverse the membrane as a helical; Signal-anchor for type II membrane protein segment; the sequence is LGRQVTMLLKVIVAVAVLFVW. Residues 23-504 lie on the Lumenal side of the membrane; it reads HRSRDSSRGD…WLGICTDYGV (482 aa). N183 carries N-linked (GlcNAc...) asparagine glycosylation. Catalysis depends on S313, which acts as the Charge relay system. The disordered stretch occupies residues 458-484; the sequence is EESSSSIASSSQLTSSHSESETLTSTD. Low complexity predominate over residues 461-483; it reads SSSIASSSQLTSSHSESETLTST.

This sequence belongs to the AB hydrolase superfamily. Lipase family. As to quaternary structure, binds to both phosphatidylinositol (PI) and phosphatidylinositol 3,5-bisphosphate (PIP2).

It is found in the endosome. It localises to the multivesicular body membrane. The protein resides in the prevacuolar compartment membrane. It carries out the reaction a triacylglycerol + H2O = a diacylglycerol + a fatty acid + H(+). Its function is as follows. Lipase which is essential for lysis of subvacuolar cytoplasm to vacuole targeted bodies and intravacuolar autophagic bodies. Involved in the lysis of intravacuolar multivesicular body (MVB) vesicles. The intravacuolar membrane disintegration by ATG15 is critical to life span extension. The sequence is that of Putative lipase ATG15 (ATG15) from Candida glabrata (strain ATCC 2001 / BCRC 20586 / JCM 3761 / NBRC 0622 / NRRL Y-65 / CBS 138) (Yeast).